Here is a 122-residue protein sequence, read N- to C-terminus: Large ribosomal subunit protein uL14 (122 aa).

It belongs to the universal ribosomal protein uL14 family. In terms of assembly, part of the 50S ribosomal subunit. Forms a cluster with proteins L3 and L19. In the 70S ribosome, L14 and L19 interact and together make contacts with the 16S rRNA in bridges B5 and B8.

Binds to 23S rRNA. Forms part of two intersubunit bridges in the 70S ribosome. This is Large ribosomal subunit protein uL14 from Orientia tsutsugamushi (strain Ikeda) (Rickettsia tsutsugamushi).